Here is a 463-residue protein sequence, read N- to C-terminus: L-seryl-tRNA(Sec) selenium transferase (463 aa).

An N6-(pyridoxal phosphate)lysine modification is found at Lys295.

The protein belongs to the SelA family. In terms of assembly, homodecamer; pentamer of dimers. Binds only one seryl-tRNA(Sec) per dimer. The cofactor is pyridoxal 5'-phosphate.

The protein resides in the cytoplasm. It catalyses the reaction L-seryl-tRNA(Sec) + selenophosphate + H(+) = L-selenocysteinyl-tRNA(Sec) + phosphate. It participates in aminoacyl-tRNA biosynthesis; selenocysteinyl-tRNA(Sec) biosynthesis; selenocysteinyl-tRNA(Sec) from L-seryl-tRNA(Sec) (bacterial route): step 1/1. Its function is as follows. Converts seryl-tRNA(Sec) to selenocysteinyl-tRNA(Sec) required for selenoprotein biosynthesis. This chain is L-seryl-tRNA(Sec) selenium transferase, found in Salmonella typhimurium (strain LT2 / SGSC1412 / ATCC 700720).